We begin with the raw amino-acid sequence, 217 residues long: MEQLSCKHRSSSMEAEAQLCRQTESRSTQLPRMSVMRHLFLLSITFLVYTLDSAKAYRPTETLCGGELVDTLQFVCGDRGFYFSTNNGRSNRRSNRGIVEECCFRSCDLELLETYCAKPSKNERDVSTAPATAIPPMNKQDLYHKHHHTKSSKYDIWQRKSIHRLRRGVPAIVRARQYRLLMQKAEESEQALLHRPLTTLPITRPLHLQQTSEPSHN.

Residues Met-1–Ala-56 form the signal peptide. The tract at residues Tyr-57–Phe-83 is b. Disulfide bonds link Cys-64–Cys-103, Cys-76–Cys-116, and Cys-102–Cys-107. Residues Ser-84–Arg-96 form a c region. The interval Gly-97–Ala-117 is a. The tract at residues Lys-118–Glu-123 is d. The propeptide at Arg-124–Asn-217 is e peptide.

It belongs to the insulin family.

It localises to the secreted. In terms of biological role, the insulin-like growth factors, isolated from plasma, are structurally and functionally related to insulin but have a much higher growth-promoting activity. Promotes anterior neural development. Acts as a ligand for integrin which is required for IGF2 signaling. This chain is Insulin-like growth factor 2.L, found in Xenopus laevis (African clawed frog).